Consider the following 335-residue polypeptide: Urokinase plasminogen activator surface receptor (335 aa).

The N-terminal stretch at 1–22 (MGHPLLLPLLLLLHTCVPASWG) is a signal peptide. UPAR/Ly6 domains follow at residues 23 to 114 (LRCM…RSRY), 115 to 213 (LECI…PQNG), and 214 to 305 (HQCY…YRKG). 3 disulfides stabilise this stretch: Cys25-Cys46, Cys28-Cys34, and Cys39-Cys67. Asn74 is a glycosylation site (N-linked (GlcNAc...) asparagine). Cystine bridges form between Cys93–Cys98, Cys117–Cys144, Cys120–Cys127, Cys137–Cys169, Cys175–Cys192, Cys193–Cys198, Cys216–Cys244, Cys219–Cys227, Cys237–Cys263, Cys269–Cys287, and Cys288–Cys293. 4 N-linked (GlcNAc...) asparagine glycosylation sites follow: Asn184, Asn194, Asn222, and Asn255. Gly305 is lipidated: GPI-anchor amidated glycine. Positions 306–335 (AAPQPGPAHLSLTITLLMTARLWGGTLLWT) are cleaved as a propeptide — removed in mature form.

In terms of assembly, monomer. Interacts (via the UPAR/Ly6 domains) with SRPX2. Interacts with MRC2. Interacts with FAP (seprase); the interaction occurs at the cell surface of invadopodia membrane. Interacts with SORL1 (via N-terminal ectodomain); this interaction decreases PLAUR internalization. The ternary complex composed of PLAUR-PLAU-SERPINE1 also interacts with SORL1.

It localises to the cell membrane. It is found in the cell projection. Its subcellular location is the invadopodium membrane. Functionally, acts as a receptor for urokinase plasminogen activator. Plays a role in localizing and promoting plasmin formation. Mediates the proteolysis-independent signal transduction activation effects of U-PA. It is subject to negative-feedback regulation by U-PA which cleaves it into an inactive form. The chain is Urokinase plasminogen activator surface receptor (PLAUR) from Chlorocebus aethiops (Green monkey).